We begin with the raw amino-acid sequence, 408 residues long: Inhibin beta B chain (408 aa).

Residues 1 to 28 form the signal peptide; that stretch reads MDGLPGRALGAACLLMLAVGSLGPGVWG. A disordered region spans residues 29–60; that stretch reads SPTPPPLPAAPQPPPPPPGAPGGSQDTCTSCG. Positions 29 to 293 are excised as a propeptide; sequence SPTPPPLPAA…GDSRHRIRKR (265 aa). Residues 30–48 are compositionally biased toward pro residues; it reads PTPPPLPAAPQPPPPPPGA. The N-linked (GlcNAc...) asparagine glycan is linked to Asn-94. Intrachain disulfides connect Cys-297/Cys-305, Cys-304/Cys-373, Cys-333/Cys-405, and Cys-337/Cys-407.

The protein belongs to the TGF-beta family. In terms of assembly, dimeric, linked by one or more disulfide bonds. Inhibin B is a dimer of alpha and beta-B. Activin B is a homodimer of beta-B. Activin AB is a dimer of beta-A and beta-B. Interacts with FST and FSTL3.

Its subcellular location is the secreted. Its function is as follows. Inhibins and activins inhibit and activate, respectively, the secretion of follitropin by the pituitary gland. Inhibins/activins are involved in regulating a number of diverse functions such as hypothalamic and pituitary hormone secretion, gonadal hormone secretion, germ cell development and maturation, erythroid differentiation, insulin secretion, nerve cell survival, embryonic axial development or bone growth, depending on their subunit composition. Inhibins appear to oppose the functions of activins. Activin B is a dimer of alpha and beta-B that plays a role in several essential biological processes including embryonic development, stem cell maintenance and differentiation, haematopoiesis, cell proliferation and wound healing. Signals through type I receptor ACVR1C, abundantly expressed in pancreatic beta cells, and type II receptors like ACVR2A. Upon ligand binding, these receptors phosphorylate intracellular signaling mediators SMAD2 and SMAD3, which form a complex with SMAD4, translocate to the nucleus, and regulate gene expression. Plays a crucial role in the induction of hepcidin by inflammation through activation of ACVR1C and subsequent phosphorylation of SMAD1/5/8. Regulates adipocyte lipid metabolism by decreasing non-esterified fatty acids and glycerol release and increases intracellular triglyceride content. Stimulates wound healing by promoting cell migration and hair follicle regeneration through the JNK and ERK signaling pathways downstream of RHOA. In terms of biological role, inhibin B is a dimer of alpha and beta-B that plays a crucial role in the regulation of the reproductive system by inhibiting the secretion of follicle-stimulating hormone (FSH) from the anterior pituitary gland. Thereby, maintains reproductive homeostasis in both males and females. Acts as a more potent suppressor of FSH release than inhibin A. Functions as competitive receptor antagonist binding activin type II receptors with high affinity in the presence of the TGF-beta type III coreceptor/TGFBR3L. The polypeptide is Inhibin beta B chain (INHBB) (Bos taurus (Bovine)).